We begin with the raw amino-acid sequence, 917 residues long: Autophagy-related protein 9 (917 aa).

Residues 1–226 (MASNIFSRLV…AGFWCIIVQR (226 aa)) lie on the Cytoplasmic side of the membrane. 2 disordered regions span residues 16–37 (RSFY…RAGI) and 119–177 (LLLS…QGRP). A helical transmembrane segment spans residues 227-247 (ILELVNAAFVAVFLTFLSQCV). Topologically, residues 248–275 (DYHKLPHSKKMEDIIIPKCTQNMSLVWN) are lumenal. Asn269 carries an N-linked (GlcNAc...) asparagine glycan. Residues 276 to 296 (VGLWLFAIYFICRCFGLIIQL) traverse the membrane as a helical segment. Over 297-442 (RQLKHLRDFY…RQLSQKLKSR (146 aa)) the chain is Cytoplasmic. The stretch at 443-463 (FFFAGLMIFVMSPFIALYLIL) is an intramembrane region. The Cytoplasmic segment spans residues 464–539 (VYFLTYFHEF…ARTVSFITGS (76 aa)). The helical transmembrane segment at 540-560 (IVAVLGLATIFDSEAFLTFEI) threads the bilayer. Topologically, residues 561–564 (TPDR) are lumenal. The chain crosses the membrane as a helical span at residues 565–585 (SVLFYVSILATLWAVARGNIS). The Cytoplasmic segment spans residues 586-633 (DDNEVYDPEFAMKSIIEFTHYEPDHWRGRLHSTEVKNEFSELYKPRPQ). Residue Lys621 is modified to N6-acetyllysine. An intramembrane segment occupies 634–654 (IFLEEILSILLTPLVLLVSLP). Residues 655–917 (NSTDQIVDFF…FQQAHMHLRR (263 aa)) are Cytoplasmic-facing. The disordered stretch occupies residues 854–895 (DARFGKLGDEDIDESGGALDESTWQTSPTKTLSRENSGANPQ). Positions 875 to 895 (STWQTSPTKTLSRENSGANPQ) are enriched in polar residues.

It belongs to the ATG9 family. As to quaternary structure, homotrimer; forms a homotrimer with a central pore that forms a path between the two membrane leaflets. Interacts with HAT1. Post-translationally, acetylated by HAT1 at Lys-621, which increases the ability to bind vesicles during nutrient starvation induction. Phosphorylated by ATG1. ATG1 phosphorylation is required for preautophagosome elongation.

The protein resides in the preautophagosomal structure membrane. The protein localises to the cytoplasmic vesicle membrane. It localises to the vacuole membrane. Its subcellular location is the golgi apparatus membrane. It is found in the endoplasmic reticulum membrane. The enzyme catalyses a 1,2-diacyl-sn-glycero-3-phosphocholine(in) = a 1,2-diacyl-sn-glycero-3-phosphocholine(out). It catalyses the reaction a 1,2-diacyl-sn-glycero-3-phospho-L-serine(in) = a 1,2-diacyl-sn-glycero-3-phospho-L-serine(out). It carries out the reaction a 1,2-diacyl-sn-glycero-3-phosphoethanolamine(in) = a 1,2-diacyl-sn-glycero-3-phosphoethanolamine(out). The catalysed reaction is a 1,2-diacyl-sn-glycero-3-phospho-(1D-myo-inositol-3-phosphate)(in) = a 1,2-diacyl-sn-glycero-3-phospho-(1D-myo-inositol-3-phosphate)(out). Phospholipid scramblase involved in autophagy and cytoplasm to vacuole transport (Cvt) vesicle formation. Cycles between the preautophagosomal structure/phagophore assembly site (PAS) and the cytoplasmic vesicle pool and supplies membrane for the growing autophagosome. Lipid scramblase activity plays a key role in preautophagosomal structure/phagophore assembly by distributing the phospholipids that arrive through ATG2 from the cytoplasmic to the luminal leaflet of the bilayer, thereby driving autophagosomal membrane expansion. Required for mitophagy. Also involved in endoplasmic reticulum-specific autophagic process and is essential for the survival of cells subjected to severe ER stress. Different machineries are required for anterograde trafficking to the PAS during either the Cvt pathway or bulk autophagy and for retrograde trafficking. Plays a role in appressorium formation and pathogenicity. This is Autophagy-related protein 9 from Pyricularia oryzae (strain 70-15 / ATCC MYA-4617 / FGSC 8958) (Rice blast fungus).